We begin with the raw amino-acid sequence, 92 residues long: Small ribosomal subunit protein uS19 (92 aa).

Belongs to the universal ribosomal protein uS19 family.

Functionally, protein S19 forms a complex with S13 that binds strongly to the 16S ribosomal RNA. This Rhizobium rhizogenes (strain K84 / ATCC BAA-868) (Agrobacterium radiobacter) protein is Small ribosomal subunit protein uS19.